We begin with the raw amino-acid sequence, 631 residues long: Mini-chromosome maintenance complex-binding protein (631 aa).

Composition is skewed to polar residues over residues 148 to 157 (ARVVPSTSYV) and 173 to 192 (TQCQ…SESH). Residues 148–218 (ARVVPSTSYV…SSSSHCTSSL (71 aa)) form a disordered region. Residues 193 to 202 (GNTEPKRQET) are compositionally biased toward basic and acidic residues. A compositionally biased stretch (low complexity) spans 206–217 (SQDSSSSHCTSS).

This sequence belongs to the MCMBP family. Interacts with the mcm complex: associates with the mcm3-7 complex which lacks mcm2, while it does not interact with the mcm complex when mcm2 is present (mcm2-7 complex).

Its subcellular location is the nucleus. Associated component of the mcm complex that acts as a regulator of DNA replication. Binds to the MCM complex during late S phase and promotes the disassembly of the mcm complex from chromatin, thereby acting as a key regulator of pre-replication complex (pre-RC) unloading from replicated DNA. Can dissociate the mcm complex without addition of ATP; probably acts by destabilizing interactions of each individual subunits of the mcm complex. Required for sister chromatid cohesion. The protein is Mini-chromosome maintenance complex-binding protein (mcmbp) of Danio rerio (Zebrafish).